Here is a 277-residue protein sequence, read N- to C-terminus: Thymidylate synthase (277 aa).

DUMP is bound by residues Arg27 and Arg132–Arg133. Catalysis depends on Cys152, which acts as the Nucleophile. Residues Arg179–Asp182, Asn190, and His220–Tyr222 contribute to the dUMP site. Residue Asp182 coordinates (6R)-5,10-methylene-5,6,7,8-tetrahydrofolate. Ala276 contacts (6R)-5,10-methylene-5,6,7,8-tetrahydrofolate.

It belongs to the thymidylate synthase family. Bacterial-type ThyA subfamily. Homodimer.

Its subcellular location is the cytoplasm. It catalyses the reaction dUMP + (6R)-5,10-methylene-5,6,7,8-tetrahydrofolate = 7,8-dihydrofolate + dTMP. Its pathway is pyrimidine metabolism; dTTP biosynthesis. Catalyzes the reductive methylation of 2'-deoxyuridine-5'-monophosphate (dUMP) to 2'-deoxythymidine-5'-monophosphate (dTMP) while utilizing 5,10-methylenetetrahydrofolate (mTHF) as the methyl donor and reductant in the reaction, yielding dihydrofolate (DHF) as a by-product. This enzymatic reaction provides an intracellular de novo source of dTMP, an essential precursor for DNA biosynthesis. This is Thymidylate synthase from Albidiferax ferrireducens (strain ATCC BAA-621 / DSM 15236 / T118) (Rhodoferax ferrireducens).